We begin with the raw amino-acid sequence, 254 residues long: Large ribosomal subunit protein uL2 (254 aa).

The protein belongs to the universal ribosomal protein uL2 family.

This is Large ribosomal subunit protein uL2 (RPL2) from Candida glabrata (strain ATCC 2001 / BCRC 20586 / JCM 3761 / NBRC 0622 / NRRL Y-65 / CBS 138) (Yeast).